A 232-amino-acid polypeptide reads, in one-letter code: UPF0177 protein in abiGi 5'region (232 aa).

Helical transmembrane passes span 12-32, 47-67, 86-106, 124-144, 165-185, and 206-226; these read YLSLFFLLFAIYWFPDVILAY, VVATWIFLGNMSISLFLGILI, LLFLLITTIILFVIYFFSYTY, SIQIVFPFVQFITIAICAPIF, IVSCVGFAWMHTGPNPILIVY, and ILVHGVFNALLPIVIPLLQVI.

Belongs to the UPF0177 family.

It localises to the cell membrane. The function of this protein is currently unknown, but it has been shown that it is not necessary for phage resistance. The protein is UPF0177 protein in abiGi 5'region of Lactococcus lactis subsp. cremoris (Streptococcus cremoris).